The chain runs to 107 residues: MHCDIYKFLKHDDMYIYIARPDYPNDTDEIKDWLGVLPKDFRAGLGRSKFVMHLDLATTPTLARVDKEEVLAKLASQGYFVQLPPQDVMRRQAELRARESQDSIYNT.

The region spanning Met-1 to Leu-95 is the YcgL domain.

This chain is YcgL domain-containing protein Pcryo_0807, found in Psychrobacter cryohalolentis (strain ATCC BAA-1226 / DSM 17306 / VKM B-2378 / K5).